The chain runs to 409 residues: Probable sodium/metabolite cotransporter BASS6, chloroplastic (409 aa).

A chloroplast-targeting transit peptide spans Met-1 to Ile-49. Helical transmembrane passes span Ile-100–Thr-120, Trp-121–Asn-141, Val-170–Gly-190, Ala-191–Leu-211, Ile-221–Leu-241, Gly-253–Asn-273, Pro-285–Leu-305, Ala-316–Leu-336, and Ile-381–Trp-401.

Belongs to the bile acid:sodium symporter (BASS) (TC 2.A.28) family.

Its subcellular location is the membrane. It is found in the plastid. The protein localises to the chloroplast envelope. In terms of biological role, may function as sodium-coupled metabolite transporter across the chloroplast envelope. In Arabidopsis thaliana (Mouse-ear cress), this protein is Probable sodium/metabolite cotransporter BASS6, chloroplastic (BASS6).